A 444-amino-acid polypeptide reads, in one-letter code: Maintenance of mitochondrial morphology protein 1 (444 aa).

Residues 1-16 (MKGVENTLSQSESVNR) show a composition bias toward polar residues. The segment at 1-20 (MKGVENTLSQSESVNRGYNG) is disordered. Residues 1–107 (MKGVENTLSQ…TFSSRSFAEG (107 aa)) lie on the Lumenal side of the membrane. A helical transmembrane segment spans residues 108 to 128 (LVVGQLSVIVVLIFFIKFFIF). Residues 129-444 (SDGPAKTGGG…QEEDPSRAPE (316 aa)) lie on the Cytoplasmic side of the membrane. The segment at 136–157 (GGGGGSSAESRSSGFTGSPLTS) is disordered. Residues 142 to 157 (SAESRSSGFTGSPLTS) show a composition bias toward low complexity. In terms of domain architecture, SMP-LTD spans 204–418 (SPESLDWFNV…EPRFQFVKLP (215 aa)). The interval 425-444 (KNTREEKSDMQEEDPSRAPE) is disordered. Residues 426–444 (NTREEKSDMQEEDPSRAPE) show a composition bias toward basic and acidic residues.

The protein belongs to the MMM1 family. In terms of assembly, homodimer. Component of the ER-mitochondria encounter structure (ERMES) or MDM complex, composed of MMM1, MDM10, MDM12 and MDM34. An MMM1 homodimer associates with one molecule of MDM12 on each side in a pairwise head-to-tail manner, and the SMP-LTD domains of MMM1 and MDM12 generate a continuous hydrophobic tunnel for phospholipid trafficking.

It localises to the endoplasmic reticulum membrane. Its function is as follows. Component of the ERMES/MDM complex, which serves as a molecular tether to connect the endoplasmic reticulum (ER) and mitochondria. Components of this complex are involved in the control of mitochondrial shape and protein biogenesis, and function in nonvesicular lipid trafficking between the ER and mitochondria. The MDM12-MMM1 subcomplex functions in the major beta-barrel assembly pathway that is responsible for biogenesis of all outer membrane beta-barrel proteins, and acts in a late step after the SAM complex. The MDM10-MDM12-MMM1 subcomplex further acts in the TOM40-specific pathway after the action of the MDM12-MMM1 complex. Essential for establishing and maintaining the structure of mitochondria and maintenance of mtDNA nucleoids. The chain is Maintenance of mitochondrial morphology protein 1 from Eremothecium gossypii (strain ATCC 10895 / CBS 109.51 / FGSC 9923 / NRRL Y-1056) (Yeast).